The following is a 567-amino-acid chain: Potassium-transporting ATPase potassium-binding subunit (567 aa).

12 consecutive transmembrane segments (helical) span residues 11 to 31 (LYLL…AALL), 67 to 87 (AAAI…LQRW), 136 to 156 (GLAV…VALV), 179 to 199 (LWLL…QGVV), 255 to 275 (FSNW…VVMF), 286 to 306 (VVLL…VYLA), 333 to 353 (FGVL…CGAV), 363 to 383 (LGGG…GGVG), 385 to 405 (GLYG…LMIG), 422 to 442 (LVSV…AIAV), 489 to 509 (LMLA…VLAL), and 532 to 552 (LFVV…YIPA).

It belongs to the KdpA family. As to quaternary structure, the system is composed of three essential subunits: KdpA, KdpB and KdpC.

The protein resides in the cell inner membrane. Functionally, part of the high-affinity ATP-driven potassium transport (or Kdp) system, which catalyzes the hydrolysis of ATP coupled with the electrogenic transport of potassium into the cytoplasm. This subunit binds the periplasmic potassium ions and delivers the ions to the membrane domain of KdpB through an intramembrane tunnel. This chain is Potassium-transporting ATPase potassium-binding subunit, found in Laribacter hongkongensis (strain HLHK9).